We begin with the raw amino-acid sequence, 229 residues long: Putative N-acetylmannosamine-6-phosphate 2-epimerase (229 aa).

It belongs to the NanE family.

It catalyses the reaction an N-acyl-D-glucosamine 6-phosphate = an N-acyl-D-mannosamine 6-phosphate. It participates in amino-sugar metabolism; N-acetylneuraminate degradation; D-fructose 6-phosphate from N-acetylneuraminate: step 3/5. Functionally, converts N-acetylmannosamine-6-phosphate (ManNAc-6-P) to N-acetylglucosamine-6-phosphate (GlcNAc-6-P). The chain is Putative N-acetylmannosamine-6-phosphate 2-epimerase from Escherichia coli O8 (strain IAI1).